Reading from the N-terminus, the 356-residue chain is sn-glycerol-3-phosphate import ATP-binding protein UgpC (356 aa).

The ABC transporter domain occupies 4-235 (LKLQAVTKSW…PASLFVASFI (232 aa)). An ATP-binding site is contributed by 37–44 (GPSGCGKS).

The protein belongs to the ABC transporter superfamily. sn-glycerol-3-phosphate importer (TC 3.A.1.1.3) family. The complex is composed of two ATP-binding proteins (UgpC), two transmembrane proteins (UgpA and UgpE) and a solute-binding protein (UgpB).

It is found in the cell inner membrane. The catalysed reaction is sn-glycerol 3-phosphate(out) + ATP + H2O = sn-glycerol 3-phosphate(in) + ADP + phosphate + H(+). Part of the ABC transporter complex UgpBAEC involved in sn-glycerol-3-phosphate (G3P) import. Responsible for energy coupling to the transport system. The polypeptide is sn-glycerol-3-phosphate import ATP-binding protein UgpC (Shigella sonnei (strain Ss046)).